Here is a 638-residue protein sequence, read N- to C-terminus: Phosphomethylpyrimidine synthase (638 aa).

Residues Asn243, Met272, Tyr301, His337, 357 to 359 (SRG), 398 to 401 (DGLR), and Glu437 each bind substrate. Zn(2+) is bound at residue His441. Residue Tyr464 coordinates substrate. Residue His505 participates in Zn(2+) binding. Cys585, Cys588, and Cys593 together coordinate [4Fe-4S] cluster.

Belongs to the ThiC family. In terms of assembly, homodimer. [4Fe-4S] cluster serves as cofactor.

The catalysed reaction is 5-amino-1-(5-phospho-beta-D-ribosyl)imidazole + S-adenosyl-L-methionine = 4-amino-2-methyl-5-(phosphooxymethyl)pyrimidine + CO + 5'-deoxyadenosine + formate + L-methionine + 3 H(+). Its pathway is cofactor biosynthesis; thiamine diphosphate biosynthesis. In terms of biological role, catalyzes the synthesis of the hydroxymethylpyrimidine phosphate (HMP-P) moiety of thiamine from aminoimidazole ribotide (AIR) in a radical S-adenosyl-L-methionine (SAM)-dependent reaction. This Dechloromonas aromatica (strain RCB) protein is Phosphomethylpyrimidine synthase.